The chain runs to 175 residues: uncharacterized protein (175 aa).

This is an uncharacterized protein from Enterobacteria phage T4 (Bacteriophage T4).